Reading from the N-terminus, the 261-residue chain is tRNA pseudouridine synthase A (261 aa).

D51 acts as the Nucleophile in catalysis. Y109 is a substrate binding site.

This sequence belongs to the tRNA pseudouridine synthase TruA family. In terms of assembly, homodimer.

The catalysed reaction is uridine(38/39/40) in tRNA = pseudouridine(38/39/40) in tRNA. Functionally, formation of pseudouridine at positions 38, 39 and 40 in the anticodon stem and loop of transfer RNAs. This is tRNA pseudouridine synthase A from Shewanella baltica (strain OS185).